A 185-amino-acid polypeptide reads, in one-letter code: Signal peptidase I P (185 aa).

The Cytoplasmic portion of the chain corresponds to 1–14 (MFDKEKRKKSNIID). Residues 15 to 34 (WIKAILIALILVFLVRTFLF) form a helical membrane-spanning segment. At 35–185 (EPYIVQGESM…FPLDRIRHAK (151 aa)) the chain is on the extracellular side. Catalysis depends on residues Ser43 and Lys85.

This sequence belongs to the peptidase S26 family.

It is found in the cell membrane. The catalysed reaction is Cleavage of hydrophobic, N-terminal signal or leader sequences from secreted and periplasmic proteins.. In Bacillus subtilis subsp. natto, this protein is Signal peptidase I P (sipP).